The primary structure comprises 709 residues: ATP-dependent zinc metalloprotease FtsH (709 aa).

At 1–25 the chain is on the cytoplasmic side; the sequence is MKKNKGLNEATTSEKPQFPKRTAWK. Residues 26–46 traverse the membrane as a helical segment; it reads IFWWVVILAIIIGILVYILMP. Topologically, residues 47–171 are extracellular; sequence RATTAVIEKW…FVAPDTRARD (125 aa). The chain crosses the membrane as a helical span at residues 172-192; it reads VLNIFFGLLPIIIFVIFFLLF. Residues 193-709 are Cytoplasmic-facing; that stretch reads WRSARGISGG…DTEKDSETNS (517 aa). Position 268–275 (268–275) interacts with ATP; the sequence is GPPGTGKT. Histidine 490 provides a ligand contact to Zn(2+). Glutamate 491 is an active-site residue. Positions 494 and 569 each coordinate Zn(2+). Positions 673 to 709 are disordered; sequence ILAQKQEQQAKQKAEAKEAKLNKKTEKDTEKDSETNS. Over residues 680-709 the composition is skewed to basic and acidic residues; sequence QQAKQKAEAKEAKLNKKTEKDTEKDSETNS.

In the central section; belongs to the AAA ATPase family. This sequence in the C-terminal section; belongs to the peptidase M41 family. In terms of assembly, homohexamer. Requires Zn(2+) as cofactor.

The protein resides in the cell membrane. Its function is as follows. Acts as a processive, ATP-dependent zinc metallopeptidase for both cytoplasmic and membrane proteins. Plays a role in the quality control of integral membrane proteins. The chain is ATP-dependent zinc metalloprotease FtsH from Mycoplasma pneumoniae (strain ATCC 29342 / M129 / Subtype 1) (Mycoplasmoides pneumoniae).